Here is a 235-residue protein sequence, read N- to C-terminus: Orotidine 5'-phosphate decarboxylase (235 aa).

Residues aspartate 10, lysine 33, 60–69 (DLKMSDIPNT), threonine 123, arginine 185, glutamine 194, glycine 214, and arginine 215 each bind substrate. The active-site Proton donor is lysine 62.

It belongs to the OMP decarboxylase family. Type 1 subfamily. As to quaternary structure, homodimer.

The enzyme catalyses orotidine 5'-phosphate + H(+) = UMP + CO2. Its pathway is pyrimidine metabolism; UMP biosynthesis via de novo pathway; UMP from orotate: step 2/2. In terms of biological role, catalyzes the decarboxylation of orotidine 5'-monophosphate (OMP) to uridine 5'-monophosphate (UMP). The chain is Orotidine 5'-phosphate decarboxylase from Lactobacillus gasseri (strain ATCC 33323 / DSM 20243 / BCRC 14619 / CIP 102991 / JCM 1131 / KCTC 3163 / NCIMB 11718 / NCTC 13722 / AM63).